The following is a 168-amino-acid chain: Peptide deformylase 2 (168 aa).

The Fe cation site is built by cysteine 91 and histidine 133. The active site involves glutamate 134. A Fe cation-binding site is contributed by histidine 137.

The protein belongs to the polypeptide deformylase family. Fe(2+) is required as a cofactor.

The catalysed reaction is N-terminal N-formyl-L-methionyl-[peptide] + H2O = N-terminal L-methionyl-[peptide] + formate. Removes the formyl group from the N-terminal Met of newly synthesized proteins. Requires at least a dipeptide for an efficient rate of reaction. N-terminal L-methionine is a prerequisite for activity but the enzyme has broad specificity at other positions. The chain is Peptide deformylase 2 from Vibrio vulnificus (strain CMCP6).